Reading from the N-terminus, the 581-residue chain is Semenogelin-2 (581 aa).

The signal sequence occupies residues 1 to 23; that stretch reads MKSIILFVLSLLLILEKQAAVMG. 4 disordered regions span residues 24–62, 132–157, 173–194, and 271–581; these read QKGG…SKGS, GGKA…GISS, KEQA…QSSY, and NLNQ…PIST. 2 stretches are compositionally biased toward polar residues: residues 138–157 and 174–194; these read GTQN…GISS and EQAS…QSSY. Basic and acidic residues predominate over residues 291-310; that stretch reads HTEERQLNHGEKSVQKDISK. Residues 324-333 are compositionally biased toward polar residues; the sequence is KSQNQVTIHS. Over residues 334–344 the composition is skewed to basic and acidic residues; the sequence is QDQEHGHKENK. Positions 366–396 are enriched in polar residues; the sequence is KSVSKGSISIQTEEQIHGKSQNQVRIPSQAQ. Composition is skewed to basic and acidic residues over residues 412 to 425 and 455 to 464; these read TEER…KDIQ and DQEHGHKENK. Composition is skewed to polar residues over residues 481-497 and 505-529; these read GKNT…SFQT and SQIQ…SGQS. 2 stretches are compositionally biased toward basic and acidic residues: residues 530–545 and 558–581; these read ADRE…KGRY and TEHE…PIST.

Belongs to the semenogelin family. In terms of assembly, interacts with SERPINA5.

Its subcellular location is the secreted. Functionally, participates in the formation of a gel matrix (sperm coagulum) entrapping the accessory gland secretions and ejaculated spermatozoa. The sequence is that of Semenogelin-2 (SEMG2) from Pongo abelii (Sumatran orangutan).